Consider the following 85-residue polypeptide: Small ribosomal subunit protein bS20 (85 aa).

The protein belongs to the bacterial ribosomal protein bS20 family.

Functionally, binds directly to 16S ribosomal RNA. The chain is Small ribosomal subunit protein bS20 from Borrelia hermsii (strain HS1 / DAH).